The primary structure comprises 248 residues: MSLFPSLPLLLLSVVATSYSETVTCEDSQKICPAVIACNSPGINGFPGKDGRDGTKGEKGEPGQGLRGLQGPPGKLGPPGNPGPSGSPGPKGQKGDPGESPDCDSSLAASERKALQTEMAHIKKWLTFSLGRQVGNKFFLTNGEMMTFDKVKALCAKFQASVATPRNAAENRAIQNLIKEEAFLGITDENTEGQFVDLIGNRLTYTNWNNGEPNNAGSDEDCVLLLKNGKWNDVPCSSSHLALCEFPI.

Positions 1-20 (MSLFPSLPLLLLSVVATSYS) are cleaved as a signal peptide. One can recognise a Collagen-like domain in the interval 42–99 (GINGFPGKDGRDGTKGEKGEPGQGLRGLQGPPGKLGPPGNPGPSGSPGPKGQKGDPGE). Residues 43–111 (INGFPGKDGR…DCDSSLAASE (69 aa)) are disordered. P47 is subject to 4-hydroxyproline. The segment covering 49-61 (KDGRDGTKGEKGE) has biased composition (basic and acidic residues). 4 positions are modified to 4-hydroxyproline: P73, P79, P82, and P88. Residues 75-87 (KLGPPGNPGPSGS) show a composition bias toward pro residues. The stretch at 112–130 (RKALQTEMAHIKKWLTFSL) forms a coiled coil. The C-type lectin domain occupies 134–245 (VGNKFFLTNG…CSSSHLALCE (112 aa)). Cystine bridges form between C155–C244 and C222–C236.

As to quaternary structure, oligomeric complex of 3 or more homotrimers. Interacts with MASP1 and MASP2. Interacts with MEP1A and MEP1B and may inhibit their catalytic activity. In terms of processing, hydroxylation on proline residues within the sequence motif, GXPG, is most likely to be 4-hydroxy as this fits the requirement for 4-hydroxylation in vertebrates.

The protein localises to the secreted. Calcium-dependent lectin involved in innate immune defense. Binds mannose, fucose and N-acetylglucosamine on different microorganisms and activates the lectin complement pathway. Binds to late apoptotic cells, as well as to apoptotic blebs and to necrotic cells, but not to early apoptotic cells, facilitating their uptake by macrophages. This Trachypithecus obscurus (Dusky leaf-monkey) protein is Mannose-binding protein C (MBL2).